A 754-amino-acid polypeptide reads, in one-letter code: Elongation factor G-1, mitochondrial (754 aa).

A mitochondrion-targeting transit peptide spans 1–17 (MARFPTSPAPNRLLRLF). One can recognise a tr-type G domain in the interval 63 to 340 (DKLRNIGISA…GVVSFLPSPN (278 aa)). Residues 72–79 (AHIDSGKT), 139–143 (DTPGH), and 193–196 (NKLD) each bind GTP.

This sequence belongs to the TRAFAC class translation factor GTPase superfamily. Classic translation factor GTPase family. EF-G/EF-2 subfamily. Expressed in cotyledons and adult leaves at the same levels.

It localises to the mitochondrion. It functions in the pathway protein biosynthesis; polypeptide chain elongation. In terms of biological role, mitochondrial GTPase that catalyzes the GTP-dependent ribosomal translocation step during translation elongation. During this step, the ribosome changes from the pre-translocational (PRE) to the post-translocational (POST) state as the newly formed A-site-bound peptidyl-tRNA and P-site-bound deacylated tRNA move to the P and E sites, respectively. Catalyzes the coordinated movement of the two tRNA molecules, the mRNA and conformational changes in the ribosome. This Arabidopsis thaliana (Mouse-ear cress) protein is Elongation factor G-1, mitochondrial (MEFG1).